The sequence spans 227 residues: Cytochrome c oxidase subunit 2 (227 aa).

At 1 to 14 (MAYPMQLGLQDATS) the chain is on the mitochondrial intermembrane side. A helical transmembrane segment spans residues 15–45 (PIMEELTDFHDHTLMIVFLISTLVLYIISLM). The Mitochondrial matrix segment spans residues 46–59 (LTTKLTHTNTMDAQ). Residues 60–87 (EVETVWTILPAIILIMIALPSLRILYMM) traverse the membrane as a helical segment. Residues 88–227 (DEINDPYLTV…QFESWTSSMT (140 aa)) are Mitochondrial intermembrane-facing. Cu cation contacts are provided by His-161, Cys-196, Glu-198, Cys-200, His-204, and Met-207. Glu-198 lines the Mg(2+) pocket.

The protein belongs to the cytochrome c oxidase subunit 2 family. Component of the cytochrome c oxidase (complex IV, CIV), a multisubunit enzyme composed of 14 subunits. The complex is composed of a catalytic core of 3 subunits MT-CO1, MT-CO2 and MT-CO3, encoded in the mitochondrial DNA, and 11 supernumerary subunits COX4I, COX5A, COX5B, COX6A, COX6B, COX6C, COX7A, COX7B, COX7C, COX8 and NDUFA4, which are encoded in the nuclear genome. The complex exists as a monomer or a dimer and forms supercomplexes (SCs) in the inner mitochondrial membrane with NADH-ubiquinone oxidoreductase (complex I, CI) and ubiquinol-cytochrome c oxidoreductase (cytochrome b-c1 complex, complex III, CIII), resulting in different assemblies (supercomplex SCI(1)III(2)IV(1) and megacomplex MCI(2)III(2)IV(2)). Found in a complex with TMEM177, COA6, COX18, COX20, SCO1 and SCO2. Interacts with TMEM177 in a COX20-dependent manner. Interacts with COX20. Interacts with COX16. Cu cation serves as cofactor.

It localises to the mitochondrion inner membrane. The catalysed reaction is 4 Fe(II)-[cytochrome c] + O2 + 8 H(+)(in) = 4 Fe(III)-[cytochrome c] + 2 H2O + 4 H(+)(out). Its function is as follows. Component of the cytochrome c oxidase, the last enzyme in the mitochondrial electron transport chain which drives oxidative phosphorylation. The respiratory chain contains 3 multisubunit complexes succinate dehydrogenase (complex II, CII), ubiquinol-cytochrome c oxidoreductase (cytochrome b-c1 complex, complex III, CIII) and cytochrome c oxidase (complex IV, CIV), that cooperate to transfer electrons derived from NADH and succinate to molecular oxygen, creating an electrochemical gradient over the inner membrane that drives transmembrane transport and the ATP synthase. Cytochrome c oxidase is the component of the respiratory chain that catalyzes the reduction of oxygen to water. Electrons originating from reduced cytochrome c in the intermembrane space (IMS) are transferred via the dinuclear copper A center (CU(A)) of subunit 2 and heme A of subunit 1 to the active site in subunit 1, a binuclear center (BNC) formed by heme A3 and copper B (CU(B)). The BNC reduces molecular oxygen to 2 water molecules using 4 electrons from cytochrome c in the IMS and 4 protons from the mitochondrial matrix. This Cratogeomys castanops (Yellow-faced pocket gopher) protein is Cytochrome c oxidase subunit 2 (MT-CO2).